Reading from the N-terminus, the 220-residue chain is Large ribosomal subunit protein bL21 (220 aa).

Residues 109-158 (SKKVAAKPATSEEKAAEEKPAKAKKEAAEKGASPRETKAAPLFSAPEGEP) form a disordered region. A compositionally biased stretch (basic and acidic residues) spans 118 to 146 (TSEEKAAEEKPAKAKKEAAEKGASPRETK).

It belongs to the bacterial ribosomal protein bL21 family. As to quaternary structure, part of the 50S ribosomal subunit. Contacts protein L20.

Its function is as follows. This protein binds to 23S rRNA in the presence of protein L20. The sequence is that of Large ribosomal subunit protein bL21 from Chelativorans sp. (strain BNC1).